A 174-amino-acid polypeptide reads, in one-letter code: Crossover junction endodeoxyribonuclease RuvC (174 aa).

Active-site residues include Asp-8, Glu-67, and Asp-139. Positions 8, 67, and 139 each coordinate Mg(2+).

Belongs to the RuvC family. Homodimer which binds Holliday junction (HJ) DNA. The HJ becomes 2-fold symmetrical on binding to RuvC with unstacked arms; it has a different conformation from HJ DNA in complex with RuvA. In the full resolvosome a probable DNA-RuvA(4)-RuvB(12)-RuvC(2) complex forms which resolves the HJ. The cofactor is Mg(2+).

Its subcellular location is the cytoplasm. The catalysed reaction is Endonucleolytic cleavage at a junction such as a reciprocal single-stranded crossover between two homologous DNA duplexes (Holliday junction).. Functionally, the RuvA-RuvB-RuvC complex processes Holliday junction (HJ) DNA during genetic recombination and DNA repair. Endonuclease that resolves HJ intermediates. Cleaves cruciform DNA by making single-stranded nicks across the HJ at symmetrical positions within the homologous arms, yielding a 5'-phosphate and a 3'-hydroxyl group; requires a central core of homology in the junction. The consensus cleavage sequence is 5'-(A/T)TT(C/G)-3'. Cleavage occurs on the 3'-side of the TT dinucleotide at the point of strand exchange. HJ branch migration catalyzed by RuvA-RuvB allows RuvC to scan DNA until it finds its consensus sequence, where it cleaves and resolves the cruciform DNA. The chain is Crossover junction endodeoxyribonuclease RuvC from Ectopseudomonas mendocina (strain ymp) (Pseudomonas mendocina).